Reading from the N-terminus, the 410-residue chain is Toluene 1,2-dioxygenase system ferredoxin--NAD(+) reductase component (410 aa).

FAD is bound at residue 4–35; the sequence is HVAIIGNGVGGFTTAQALRAEGFEGRISLIGD. An NAD(+)-binding site is contributed by 145–173; it reads RLLIVGGGLIGCEVATTARKLGLSVTILE.

The protein belongs to the bacterial ring-hydroxylating dioxygenase ferredoxin reductase family. In terms of assembly, this dioxygenase system consists of four proteins: the two subunits of the hydroxylase component (todC1 and todC2), a ferredoxin (TodB) and a ferredoxin reductase (TodA). FAD serves as cofactor.

The enzyme catalyses 2 reduced [2Fe-2S]-[ferredoxin] + NAD(+) + H(+) = 2 oxidized [2Fe-2S]-[ferredoxin] + NADH. It participates in xenobiotic degradation; toluene degradation. Its function is as follows. Part of the electron transfer component of toluene 1,2-dioxygenase, transfers electrons from ferredoxin (TodB) to NADH. The polypeptide is Toluene 1,2-dioxygenase system ferredoxin--NAD(+) reductase component (todA) (Pseudomonas putida (strain ATCC 700007 / DSM 6899 / JCM 31910 / BCRC 17059 / LMG 24140 / F1)).